Reading from the N-terminus, the 1030-residue chain is MPKDTSISSILVIGSGPIIIGQAAEFDYSGTQGCIALKEEGYRVILVNSNPATIMTDEAFADEIYFEPLTAESLTAIIKKERPDGLLANLGGQTALNLAVELEETGVLKEHGVKLLGTSVETIQKGEDREKFRSLMNELKQPVPESEIVDNEADALHFAESIGFPVIIRPAYTLGGKGGGIAPDKEAFTAMIKQALLASPINQCLVEKSIAGFKEIEYEVMRDSNNTCITVCNMENIDPVGVHTGDSIVVAPSQTLTDEDYQMLRTASLTIISALDVVGGCNIQFALDPFSKQYYVIEVNPRVSRSSALASKATGYPIAKMAAKLAVGYTLDELKNPLTGSTYASFEPALDYVIVKFPRWPFDKFKNADRKLGTKMKATGEVMAIERNLEAAIQKAAASLELKNIGTHLPELSGLSIDTLWDLAITPDDRRFFVVMELLSRSVSIDDIHEKTKIDPFFLHTFDNIIKLENRLMEAGSDLSFELLKKAKEKGFSDATIASLISKTEEEVRALRKEMGITPSFKIVDTCAAEFDAKTNYFYSTYFGETDGDISRKEKKRALIIGSGPIRIGQGVEFDYSAVHGVLTLQELGFETIMINNNPETVSTDYEIADRLYFEPMTTEHIVNVAEQENIDFAIVQFGGQTAINAAEALEKAGITLLGTSFQTLDVLEDRDQFYQLLDELGLKHAKGEIAYTKEEAASKASEIGYPVLIRPSYVIGGMGMIIVDSQAQLSQLLNDEDSMPYPILIDQYVSGKEVEIDLISDGEEVFIPTYTEHIERAGVHSGDSFAILPGPSITSGLQQGMKDAAQKIARKLSFKGIMNIQFVIDNGNILVLEVNPRASRTVPVVSKVMGVPMIPLATRLLAGASLKDLNPAVQNHHGVAVKFPVFSSHAIQDVDVKLGPEMKSTGEGMCVAYDSNSALKKIYTRVWSQKGSIYLQNVPEDVKELAENAGFTIHEGTFASWMEQEGNSLHINLSGSEEARKERLEAMTHGIPVFTEEETVRAFLQSGSGHPQPVSLKDLYKKEVASCTQ.

The segment at 1-401 is carboxyphosphate synthetic domain; that stretch reads MPKDTSISSI…AIQKAAASLE (401 aa). 12 residues coordinate ATP: Arg-129, Arg-169, Gly-175, Gly-176, Lys-208, Ile-210, Glu-215, Gly-241, Val-242, His-243, Gln-284, and Glu-298. The region spanning 133 to 327 is the ATP-grasp 1 domain; sequence RSLMNELKQP…IAKMAAKLAV (195 aa). Gln-284, Glu-298, and Asn-300 together coordinate Mg(2+). Gln-284, Glu-298, and Asn-300 together coordinate Mn(2+). The oligomerization domain stretch occupies residues 402-548; the sequence is LKNIGTHLPE…YSTYFGETDG (147 aa). The interval 549–928 is carbamoyl phosphate synthetic domain; sequence DISRKEKKRA…ALKKIYTRVW (380 aa). The 189-residue stretch at 675–863 folds into the ATP-grasp 2 domain; that stretch reads YQLLDELGLK…MIPLATRLLA (189 aa). ATP-binding residues include Arg-711, Gln-748, Val-750, Glu-754, Gly-779, Val-780, His-781, Ser-782, Gln-822, and Glu-834. Gln-822, Glu-834, and Asn-836 together coordinate Mg(2+). Mn(2+)-binding residues include Gln-822, Glu-834, and Asn-836. The region spanning 925 to 1027 is the MGS-like domain; it reads TRVWSQKGSI…KDLYKKEVAS (103 aa). Positions 929 to 1030 are allosteric domain; sequence SQKGSIYLQN…YKKEVASCTQ (102 aa).

This sequence belongs to the CarB family. In terms of assembly, composed of two chains; the small (or glutamine) chain promotes the hydrolysis of glutamine to ammonia, which is used by the large (or ammonia) chain to synthesize carbamoyl phosphate. Tetramer of heterodimers (alpha,beta)4. Mg(2+) serves as cofactor. Mn(2+) is required as a cofactor.

The catalysed reaction is hydrogencarbonate + L-glutamine + 2 ATP + H2O = carbamoyl phosphate + L-glutamate + 2 ADP + phosphate + 2 H(+). The enzyme catalyses hydrogencarbonate + NH4(+) + 2 ATP = carbamoyl phosphate + 2 ADP + phosphate + 2 H(+). It functions in the pathway amino-acid biosynthesis; L-arginine biosynthesis; carbamoyl phosphate from bicarbonate: step 1/1. Functionally, large subunit of the glutamine-dependent carbamoyl phosphate synthetase (CPSase). CPSase catalyzes the formation of carbamoyl phosphate from the ammonia moiety of glutamine, carbonate, and phosphate donated by ATP, constituting the first step of the biosynthetic pathway leading to arginine and/or urea. The large subunit (synthetase) binds the substrates ammonia (free or transferred from glutamine from the small subunit), hydrogencarbonate and ATP and carries out an ATP-coupled ligase reaction, activating hydrogencarbonate by forming carboxy phosphate which reacts with ammonia to form carbamoyl phosphate. The polypeptide is Carbamoyl phosphate synthase arginine-specific large chain (Bacillus subtilis (strain 168)).